The primary structure comprises 299 residues: Heat stress transcription factor B-2a (299 aa).

A DNA-binding region spans residues 21 to 115; sequence PTPFLTKTFN…LLREIQRRKI (95 aa). Residues 119–157 form a disordered region; that stretch reads HQTVVAPSSEQRNQTMVVSPSNSGEDNNNNQVMSSSPSS. Residues 166–211 are hydrophobic repeat HR-A/B; the sequence is TGNGGLSVELLEENEKLRSQNIQLNRELTQMKSICDNIYSLMSNYV. The Nuclear localization signal motif lies at 261–264; that stretch reads KRTR.

The protein belongs to the HSF family. Class B subfamily. Homotrimer. In terms of processing, exhibits temperature-dependent phosphorylation.

The protein resides in the nucleus. In terms of biological role, transcriptional regulator that specifically binds DNA sequence 5'-AGAAnnTTCT-3' known as heat shock promoter elements (HSE). This Arabidopsis thaliana (Mouse-ear cress) protein is Heat stress transcription factor B-2a (HSFB2A).